The sequence spans 26 residues: Nicotinic acetylcholine receptor-binding protein Mnn-1A (26 aa).

Residues cysteine 3 and cysteine 22 are joined by a disulfide bond.

It belongs to the three-finger toxin family. Short-chain subfamily. In terms of tissue distribution, expressed by the venom gland.

It localises to the secreted. Functionally, binds and may inhibit nicotinic acetylcholine receptors (nAChR). This is Nicotinic acetylcholine receptor-binding protein Mnn-1A from Micrurus nigrocinctus (Central American coral snake).